Here is a 587-residue protein sequence, read N- to C-terminus: Protein POF1B (587 aa).

Positions 331–529 (STFSNIREEL…EELSKLRQEI (199 aa)) form a coiled coil.

In terms of assembly, interacts with nonmuscle actin. In terms of tissue distribution, expression absent in adult ovary.

It localises to the cell junction. It is found in the tight junction. In terms of biological role, plays a key role in the organization of epithelial monolayers by regulating the actin cytoskeleton. May be involved in ovary development. This chain is Protein POF1B (Pof1b), found in Mus musculus (Mouse).